Here is a 453-residue protein sequence, read N- to C-terminus: BPI fold-containing family B member 6 (453 aa).

Residues 1–18 form the signal peptide; the sequence is MLRILCLALCSLLTGTRA. Asparagine 114 carries N-linked (GlcNAc...) asparagine glycosylation. Cysteine 137 and cysteine 174 are joined by a disulfide. Asparagine 190 carries N-linked (GlcNAc...) asparagine glycosylation.

It belongs to the BPI/LBP/Plunc superfamily. BPI/LBP family. In terms of tissue distribution, detected at very low levels in normal tonsils, and at higher levels in hypertrophic tonsils.

The protein localises to the secreted. The polypeptide is BPI fold-containing family B member 6 (BPIFB6) (Homo sapiens (Human)).